The following is a 115-amino-acid chain: Immunoglobulin kappa variable 5-2 (115 aa).

The signal sequence occupies residues 1–20; that stretch reads MGSQVHLLSFLLLWISDTRA. The segment at 21–43 is framework-1; that stretch reads ETTLTQSPAFMSATPGDKVNISC. The Ig-like domain occupies 22 to 115; that stretch reads TTLTQSPAFM…YFCLQHDNFP (94 aa). An N-linked (GlcNAc...) asparagine glycan is attached at N40. Position 42 is a phosphoserine (S42). The cysteines at positions 43 and 108 are disulfide-linked. The segment at 44–54 is complementarity-determining-1; that stretch reads KASQDIDDDMN. Residues 55-69 form a framework-2 region; it reads WYQQKPGEAAIFIIQ. Residues 70–76 are complementarity-determining-2; it reads EATTLVP. The framework-3 stretch occupies residues 77–108; the sequence is GIPPRFSGSGYGTDFTLTINNIESEDAAYYFC. Residues 109–115 are complementarity-determining-3; that stretch reads LQHDNFP.

In terms of assembly, immunoglobulins are composed of two identical heavy chains and two identical light chains; disulfide-linked.

It localises to the secreted. It is found in the cell membrane. In terms of biological role, v region of the variable domain of immunoglobulin light chains that participates in the antigen recognition. Immunoglobulins, also known as antibodies, are membrane-bound or secreted glycoproteins produced by B lymphocytes. In the recognition phase of humoral immunity, the membrane-bound immunoglobulins serve as receptors which, upon binding of a specific antigen, trigger the clonal expansion and differentiation of B lymphocytes into immunoglobulins-secreting plasma cells. Secreted immunoglobulins mediate the effector phase of humoral immunity, which results in the elimination of bound antigens. The antigen binding site is formed by the variable domain of one heavy chain, together with that of its associated light chain. Thus, each immunoglobulin has two antigen binding sites with remarkable affinity for a particular antigen. The variable domains are assembled by a process called V-(D)-J rearrangement and can then be subjected to somatic hypermutations which, after exposure to antigen and selection, allow affinity maturation for a particular antigen. This chain is Immunoglobulin kappa variable 5-2, found in Homo sapiens (Human).